The chain runs to 30 residues: GFPCGESCVYIPCFTAAIGCSCKSKVCYKN.

The segment at residues 1–30 (GFPCGESCVYIPCFTAAIGCSCKSKVCYKN) is a cross-link (cyclopeptide (Gly-Asn)). Disulfide bonds link cysteine 4–cysteine 20, cysteine 8–cysteine 22, and cysteine 13–cysteine 27.

In terms of processing, this is a cyclic peptide. Detected in stems (at protein level).

Its function is as follows. Probably participates in a plant defense mechanism. Has strong cytotoxic activity against HUVEC cells (LC(50)= 0.58 uM) and various cancer cells including HeLa (LC(50)= 0.48 uM), MCF-7 and K562. Also displays some hemolytic activity. Binds to and induces leakage in phospholipd membranes, particularly ones containing 1-palmitoyl-2-oleophosphatidylethanolamine (POPE). This chain is Cyclotide hyen-D, found in Pigea enneasperma (Spade flower).